Consider the following 1486-residue polypeptide: Chromosome partition protein MukB (1486 aa).

Residue 34–41 (GGNGAGKS) coordinates ATP. Coiled coils occupy residues 326-418 (LEAD…QYNQ), 444-480 (LETF…QAYQ), and 509-603 (RHLA…RAPV). Residues 666–783 (PGGSEDQRLN…EVPLFGRAAR (118 aa)) are flexible hinge. Coiled-coil stretches lie at residues 835 to 923 (EAEI…AKLE), 977 to 1115 (EMLS…TAKA), and 1209 to 1266 (VEAI…QNVS).

This sequence belongs to the SMC family. MukB subfamily. As to quaternary structure, homodimerization via its hinge domain. Binds to DNA via its C-terminal region. Interacts, and probably forms a ternary complex, with MukE and MukF via its C-terminal region. The complex formation is stimulated by calcium or magnesium. Interacts with tubulin-related protein FtsZ.

It is found in the cytoplasm. The protein resides in the nucleoid. Its function is as follows. Plays a central role in chromosome condensation, segregation and cell cycle progression. Functions as a homodimer, which is essential for chromosome partition. Involved in negative DNA supercoiling in vivo, and by this means organize and compact chromosomes. May achieve or facilitate chromosome segregation by condensation DNA from both sides of a centrally located replisome during cell division. In Shigella boydii serotype 18 (strain CDC 3083-94 / BS512), this protein is Chromosome partition protein MukB.